We begin with the raw amino-acid sequence, 315 residues long: Aspartate carbamoyltransferase catalytic subunit (315 aa).

Residues Arg64 and Thr65 each coordinate carbamoyl phosphate. Lys92 is an L-aspartate binding site. The carbamoyl phosphate site is built by Arg114, His142, and Gln145. 2 residues coordinate L-aspartate: Arg176 and Arg230. Carbamoyl phosphate is bound by residues Gly271 and Pro272.

The protein belongs to the aspartate/ornithine carbamoyltransferase superfamily. ATCase family. As to quaternary structure, heterododecamer (2C3:3R2) of six catalytic PyrB chains organized as two trimers (C3), and six regulatory PyrI chains organized as three dimers (R2).

It carries out the reaction carbamoyl phosphate + L-aspartate = N-carbamoyl-L-aspartate + phosphate + H(+). The protein operates within pyrimidine metabolism; UMP biosynthesis via de novo pathway; (S)-dihydroorotate from bicarbonate: step 2/3. Catalyzes the condensation of carbamoyl phosphate and aspartate to form carbamoyl aspartate and inorganic phosphate, the committed step in the de novo pyrimidine nucleotide biosynthesis pathway. The sequence is that of Aspartate carbamoyltransferase catalytic subunit from Lawsonia intracellularis (strain PHE/MN1-00).